The chain runs to 241 residues: Probable xyloglucan-specific endo-beta-1,4-glucanase A (241 aa).

A signal peptide spans 1-15 (MKVLALSALLSLASA). An N-linked (GlcNAc...) asparagine glycan is attached at N47.

The protein belongs to the glycosyl hydrolase 12 (cellulase H) family.

It localises to the secreted. It catalyses the reaction xyloglucan + H2O = xyloglucan oligosaccharides.. Functionally, catalyzes endohydrolysis of 1,4-beta-D-glucosidic linkages in xyloglucan with retention of the beta-configuration of the glycosyl residues. Specific for xyloglucan and does not hydrolyze other cell wall components. In Aspergillus niger (strain ATCC MYA-4892 / CBS 513.88 / FGSC A1513), this protein is Probable xyloglucan-specific endo-beta-1,4-glucanase A (xgeA).